The primary structure comprises 238 residues: Purine nucleoside phosphorylase DeoD-type (238 aa).

Position 5 (histidine 5) interacts with a purine D-ribonucleoside. Phosphate contacts are provided by residues glycine 21, arginine 25, arginine 44, and 88-91 (RIGT). A purine D-ribonucleoside contacts are provided by residues 180 to 182 (DME) and 204 to 205 (SD). Aspartate 205 functions as the Proton donor in the catalytic mechanism.

This sequence belongs to the PNP/UDP phosphorylase family. In terms of assembly, homohexamer; trimer of homodimers.

It catalyses the reaction a purine D-ribonucleoside + phosphate = a purine nucleobase + alpha-D-ribose 1-phosphate. The catalysed reaction is a purine 2'-deoxy-D-ribonucleoside + phosphate = a purine nucleobase + 2-deoxy-alpha-D-ribose 1-phosphate. Catalyzes the reversible phosphorolytic breakdown of the N-glycosidic bond in the beta-(deoxy)ribonucleoside molecules, with the formation of the corresponding free purine bases and pentose-1-phosphate. This Buchnera aphidicola subsp. Baizongia pistaciae (strain Bp) protein is Purine nucleoside phosphorylase DeoD-type.